Reading from the N-terminus, the 226-residue chain is PKHD-type hydroxylase AZC_3753 (226 aa).

In terms of domain architecture, Fe2OG dioxygenase spans 78–178 (RILPPMFNRY…RVASFFWTQS (101 aa)). Fe cation contacts are provided by His-96, Asp-98, and His-159. Residue Arg-169 coordinates 2-oxoglutarate.

Fe(2+) is required as a cofactor. Requires L-ascorbate as cofactor.

This Azorhizobium caulinodans (strain ATCC 43989 / DSM 5975 / JCM 20966 / LMG 6465 / NBRC 14845 / NCIMB 13405 / ORS 571) protein is PKHD-type hydroxylase AZC_3753.